A 172-amino-acid polypeptide reads, in one-letter code: Large ribosomal subunit protein bL17 (172 aa).

The interval 127-172 is disordered; sequence KAAKQDRAKRVKGSKKVTGDVAPAVAPVPSAPAETQEEAKAPESAE. Over residues 147 to 159 the composition is skewed to low complexity; the sequence is VAPAVAPVPSAPA. Residues 163–172 are compositionally biased toward basic and acidic residues; that stretch reads EEAKAPESAE.

It belongs to the bacterial ribosomal protein bL17 family. In terms of assembly, part of the 50S ribosomal subunit. Contacts protein L32.

This chain is Large ribosomal subunit protein bL17, found in Chlorobium luteolum (strain DSM 273 / BCRC 81028 / 2530) (Pelodictyon luteolum).